Here is a 618-residue protein sequence, read N- to C-terminus: 2-succinyl-5-enolpyruvyl-6-hydroxy-3-cyclohexene-1-carboxylate synthase (618 aa).

Residues 192-215 are disordered; sequence DPVAERGRDGPYVDVTPGSPEPGD.

Belongs to the TPP enzyme family. MenD subfamily. Homodimer. Mg(2+) serves as cofactor. The cofactor is Mn(2+). Requires thiamine diphosphate as cofactor.

The catalysed reaction is isochorismate + 2-oxoglutarate + H(+) = 5-enolpyruvoyl-6-hydroxy-2-succinyl-cyclohex-3-ene-1-carboxylate + CO2. It participates in quinol/quinone metabolism; 1,4-dihydroxy-2-naphthoate biosynthesis; 1,4-dihydroxy-2-naphthoate from chorismate: step 2/7. Its pathway is quinol/quinone metabolism; menaquinone biosynthesis. Functionally, catalyzes the thiamine diphosphate-dependent decarboxylation of 2-oxoglutarate and the subsequent addition of the resulting succinic semialdehyde-thiamine pyrophosphate anion to isochorismate to yield 2-succinyl-5-enolpyruvyl-6-hydroxy-3-cyclohexene-1-carboxylate (SEPHCHC). The polypeptide is 2-succinyl-5-enolpyruvyl-6-hydroxy-3-cyclohexene-1-carboxylate synthase (Halorubrum lacusprofundi (strain ATCC 49239 / DSM 5036 / JCM 8891 / ACAM 34)).